Reading from the N-terminus, the 238-residue chain is Ribitol-5-phosphate cytidylyltransferase (238 aa).

Residues 7-10 (FAGG) and 80-86 (GETGQES) contribute to the CTP site.

It belongs to the IspD/TarI cytidylyltransferase family. TarI subfamily.

It catalyses the reaction D-ribitol 5-phosphate + CTP + H(+) = CDP-L-ribitol + diphosphate. Functionally, catalyzes the transfer of the cytidylyl group of CTP to D-ribitol 5-phosphate. The protein is Ribitol-5-phosphate cytidylyltransferase of Vibrio parahaemolyticus serotype O3:K6 (strain RIMD 2210633).